The chain runs to 317 residues: Homoserine kinase (317 aa).

95 to 105 (PHSRGLGSSAA) is a binding site for ATP.

The protein belongs to the GHMP kinase family. Homoserine kinase subfamily.

The protein resides in the cytoplasm. It catalyses the reaction L-homoserine + ATP = O-phospho-L-homoserine + ADP + H(+). It participates in amino-acid biosynthesis; L-threonine biosynthesis; L-threonine from L-aspartate: step 4/5. Functionally, catalyzes the ATP-dependent phosphorylation of L-homoserine to L-homoserine phosphate. The sequence is that of Homoserine kinase from Mycolicibacterium smegmatis (strain ATCC 700084 / mc(2)155) (Mycobacterium smegmatis).